An 832-amino-acid polypeptide reads, in one-letter code: Sodium/hydrogen exchanger 3 (832 aa).

Positions 1–29 are cleaved as a signal peptide; sequence MGRNRSGCVARCVSLTALVLLLCCPVVRS. Residues 30 to 66 lie on the Extracellular side of the membrane; that stretch reads SEAETDPDSHTEHGDSHGGSREGNDTGFQIVTFRWEH. The interval 31–51 is disordered; that stretch reads EAETDPDSHTEHGDSHGGSRE. Basic and acidic residues predominate over residues 36-51; the sequence is PDSHTEHGDSHGGSRE. The helical transmembrane segment at 67–89 threads the bilayer; it reads VQTPYVIALWILVASLGKIVFHL. At 90 to 97 the chain is on the cytoplasmic side; sequence SEKVTSVV. A helical transmembrane segment spans residues 98–117; that stretch reads PESALLIVLGLILGGIVWAA. At 118–126 the chain is on the extracellular side; the sequence is DHSASFTLT. Residues 127 to 144 form a helical membrane-spanning segment; it reads PTVFFFYLLPPIVLDAGY. The Cytoplasmic segment spans residues 145–147; that stretch reads FMP. The chain crosses the membrane as a helical span at residues 148-183; that stretch reads NRHFFGNLGTILTYAVIGTVWNAATTGLSLYGVFLL. A 1,2-diacyl-sn-glycero-3-phospho-(1D-myo-inositol) contacts are provided by G153, G156, and T157. Over 184 to 196 the chain is Extracellular; sequence GLMGDLKAGLLEF. Residues 197-218 traverse the membrane as a helical segment; that stretch reads LLFGSLIAAVDPVAVLAVFEEV. The Cytoplasmic segment spans residues 219–220; it reads HV. The helical transmembrane segment at 221 to 252 threads the bilayer; that stretch reads NEVLFIIVFGESLLNDAVTVVLYNVFNSFVEV. Residues 253–259 lie on the Extracellular side of the membrane; sequence GAGNVQG. Residues 260-294 form a helical membrane-spanning segment; sequence LDYFKGIVSFFVVSLGGTAVGIIFAFILSLVTRFT. Topologically, residues 295 to 296 are cytoplasmic; that stretch reads KH. Residues 297–319 traverse the membrane as a helical segment; it reads VRVIEPGFVFVISYLSYLTADML. Residues 320 to 321 are Extracellular-facing; sequence SL. The chain crosses the membrane as a helical span at residues 322–338; the sequence is SAILAITFCGICCQKYV. The Cytoplasmic portion of the chain corresponds to 339–345; that stretch reads KANLCEQ. Residues 346 to 374 form a helical membrane-spanning segment; it reads SITTVRYAMKMLASGAETIIFMFLGISAV. At 375 to 382 the chain is on the extracellular side; sequence NPTIWTWN. A helical membrane pass occupies residues 383–404; sequence TAFILLTLVFISVYRVIGVVIQ. The Cytoplasmic segment spans residues 405–417; it reads TWILNHYRVVQLE. The helical transmembrane segment at 418 to 441 threads the bilayer; the sequence is IIDQVVMSYGGLRGAVAFALVVLL. The Extracellular portion of the chain corresponds to 442–448; it reads DSNYVGE. A helical transmembrane segment spans residues 449-482; the sequence is RRLFVSTTIIVVYFTVIFQGLTIKPLVKWLKVKR. Residues 483 to 832 are Cytoplasmic-facing; sequence SQHKEPLLNE…PLSFLPESSM (350 aa). 3 residues coordinate a 1,2-diacyl-sn-glycero-3-phospho-(1D-myo-inositol): Q512, I513, and H515. A disordered region spans residues 740-760; it reads TPASNDADETGTGIDNPSFSN.

It belongs to the monovalent cation:proton antiporter 1 (CPA1) transporter (TC 2.A.36) family. In terms of assembly, homodimer. In terms of tissue distribution, detected in early distal renal tubules in the kidney bundle zone, in proximal and late distal tubules in the kidney sinus zone, in absorptive epithelial cells of the intestine and in rectal epithelium (at protein level). Isoform 1 is expressed strongly in the gills, at intermediate levels in the kidney, spleen, rectum, spiral intestine and skin, and weakly in the brain, blood and rectal gland. Isoform 2 is expressed strongly in the kidney, rectum and spiral intestine, and weakly in muscles and the rectal gland.

The protein resides in the apical cell membrane. It localises to the cell membrane. Its subcellular location is the recycling endosome membrane. The protein localises to the early endosome membrane. It catalyses the reaction Na(+)(in) + H(+)(out) = Na(+)(out) + H(+)(in). Seems to switch between active and inactive modes in response to various stimuli. Activated directly or indirectly by membrane phosphatidylinositol (PIs). Regulated by a variety of auxiliary proteins, which facilitate the maturation, cell surface expression and function of the transporter. Inhibited specifically by the drug tenapanor. In terms of biological role, plasma membrane Na(+)/H(+) antiporter. Exchanges intracellular H(+) ions for extracellular Na(+) in 1:1 stoichiometry, playing a key role in salt and fluid absorption and pH homeostasis. Major apical Na(+)/H(+) exchanger in kidney and intestine playing an important role in renal and intestine Na(+) absorption and blood pressure regulation. This chain is Sodium/hydrogen exchanger 3, found in Triakis scyllium (Banded houndshark).